A 459-amino-acid chain; its full sequence is Alpha,alpha-trehalose-phosphate synthase [UDP-forming] (459 aa).

Tyr-86 and Asp-140 together coordinate D-glucose 6-phosphate. UDP-binding residues include Arg-262 and Lys-267. Positions 262 and 267 each coordinate UDP-alpha-D-glucose. Arg-300 serves as a coordination point for D-glucose 6-phosphate. Residue 361 to 369 coordinates UDP-alpha-D-glucose; the sequence is DGMNLVALE. 365–369 serves as a coordination point for UDP; the sequence is LVALE.

It belongs to the glycosyltransferase 20 family. Component of the trehalose synthase complex.

Its subcellular location is the cytoplasm. It carries out the reaction D-glucose 6-phosphate + UDP-alpha-D-glucose = alpha,alpha-trehalose 6-phosphate + UDP + H(+). Functionally, synthase catalytic subunit of the trehalose synthase complex that catalyzes the production of trehalose from glucose-6-phosphate and UDP-alpha-D-glucose in a two step process. Can function independently of the complex. This chain is Alpha,alpha-trehalose-phosphate synthase [UDP-forming] (TPS1), found in Encephalitozoon cuniculi (strain GB-M1) (Microsporidian parasite).